A 372-amino-acid polypeptide reads, in one-letter code: Queuine tRNA-ribosyltransferase (372 aa).

Asp90 serves as the catalytic Proton acceptor. Residues Asp90–Phe94, Asp144, Gln193, and Gly220 each bind substrate. Residues Gly251–Asp257 are RNA binding. The active-site Nucleophile is the Asp270. Residues Thr275 to Arg279 form an RNA binding; important for wobble base 34 recognition region. Zn(2+) is bound by residues Cys308, Cys310, Cys313, and His339.

The protein belongs to the queuine tRNA-ribosyltransferase family. In terms of assembly, homodimer. Within each dimer, one monomer is responsible for RNA recognition and catalysis, while the other monomer binds to the replacement base PreQ1. Zn(2+) serves as cofactor.

The catalysed reaction is 7-aminomethyl-7-carbaguanine + guanosine(34) in tRNA = 7-aminomethyl-7-carbaguanosine(34) in tRNA + guanine. It participates in tRNA modification; tRNA-queuosine biosynthesis. Catalyzes the base-exchange of a guanine (G) residue with the queuine precursor 7-aminomethyl-7-deazaguanine (PreQ1) at position 34 (anticodon wobble position) in tRNAs with GU(N) anticodons (tRNA-Asp, -Asn, -His and -Tyr). Catalysis occurs through a double-displacement mechanism. The nucleophile active site attacks the C1' of nucleotide 34 to detach the guanine base from the RNA, forming a covalent enzyme-RNA intermediate. The proton acceptor active site deprotonates the incoming PreQ1, allowing a nucleophilic attack on the C1' of the ribose to form the product. After dissociation, two additional enzymatic reactions on the tRNA convert PreQ1 to queuine (Q), resulting in the hypermodified nucleoside queuosine (7-(((4,5-cis-dihydroxy-2-cyclopenten-1-yl)amino)methyl)-7-deazaguanosine). The sequence is that of Queuine tRNA-ribosyltransferase from Sulfurimonas denitrificans (strain ATCC 33889 / DSM 1251) (Thiomicrospira denitrificans (strain ATCC 33889 / DSM 1251)).